A 406-amino-acid chain; its full sequence is 5-hydroxytryptamine receptor 4 (406 aa).

At M1–K19 the chain is on the extracellular side. A glycan (N-linked (GlcNAc...) asparagine) is linked at N7. Residues V20–V44 form a helical membrane-spanning segment. At C45 to K54 the chain is on the cytoplasmic side. Residues T55–A78 form a helical membrane-spanning segment. Residues I79 to F92 are Extracellular-facing. Residues C93–D117 form a helical membrane-spanning segment. A disulfide bridge links C93 with C184. D100 contributes to the serotonin binding site. Residues R118 to M133 lie on the Cytoplasmic side of the membrane. The helical transmembrane segment at T134–I157 threads the bilayer. The Extracellular segment spans residues M158 to V188. Residues N189–Y212 form a helical membrane-spanning segment. At Y213–A257 the chain is on the cytoplasmic side. Residues A258–P283 traverse the membrane as a helical segment. Serotonin is bound at residue N279. Topologically, residues F284 to P290 are extracellular. A helical transmembrane segment spans residues E291–F314. Over L315–S406 the chain is Cytoplasmic.

It belongs to the G-protein coupled receptor 1 family. As to quaternary structure, interacts (via C-terminus 330-346 AA) with GRK5; this interaction is promoted by 5-HT (serotonin). In terms of tissue distribution, in brain, isoform 5-HT4S is restricted to the striatum. In peripheral tissues, differential expression is also observed in the atrium of the heart where only isoform 5-HT4S is detectable. In brain, isoform 5-HT4L is expressed throughout the brain, except in the cerebellum.

It is found in the cell membrane. Its subcellular location is the endosome membrane. G-protein coupled receptor for 5-hydroxytryptamine (serotonin), a biogenic hormone that functions as a neurotransmitter, a hormone and a mitogen. Ligand binding causes a conformation change that triggers signaling via guanine nucleotide-binding proteins (G proteins) and modulates the activity of downstream effectors. HTR4 is coupled to G(s) G alpha proteins and mediates activation of adenylate cyclase activity. The chain is 5-hydroxytryptamine receptor 4 (Htr4) from Rattus norvegicus (Rat).